We begin with the raw amino-acid sequence, 1188 residues long: AT-rich interactive domain-containing protein 5B (1188 aa).

Residue lysine 130 forms a Glycyl lysine isopeptide (Lys-Gly) (interchain with G-Cter in SUMO2) linkage. A disordered region spans residues 251-277 (RPRKKKPCPQRRDSFSGVKDSNNNSDG). Phosphoserine is present on serine 264. The 93-residue stretch at 318–410 (RADEQAFLVA…LILPYERFIK (93 aa)) folds into the ARID domain. Residue lysine 336 is modified to N6,N6-dimethyllysine. The tract at residues 412-611 (EEDKPLPPIK…QPPLANQNET (200 aa)) is disordered. A Glycyl lysine isopeptide (Lys-Gly) (interchain with G-Cter in SUMO2) cross-link involves residue lysine 445. A compositionally biased stretch (basic and acidic residues) spans 446-458 (HEIPKSKKEKENA). Glycyl lysine isopeptide (Lys-Gly) (interchain with G-Cter in SUMO2) cross-links involve residues lysine 494 and lysine 496. Over residues 597 to 609 (SFPTTQPPLANQN) the composition is skewed to polar residues. Glycyl lysine isopeptide (Lys-Gly) (interchain with G-Cter in SUMO2) cross-links involve residues lysine 767, lysine 774, lysine 803, and lysine 810. Disordered regions lie at residues 846-874 (HHLHNEQTSKYPSRDMYRESENSSFPSHR) and 891-918 (DKKSAAAEAPTDDQPTDLSLPKNPHKPT). A compositionally biased stretch (basic and acidic residues) spans 847–866 (HLHNEQTSKYPSRDMYRESE). Residues lysine 893, lysine 916, lysine 920, and lysine 935 each participate in a glycyl lysine isopeptide (Lys-Gly) (interchain with G-Cter in SUMO2) cross-link. The tract at residues 956–978 (RVSPMTMSGPKKYPESLSRSGKP) is disordered. Residues lysine 988, lysine 1000, and lysine 1013 each participate in a glycyl lysine isopeptide (Lys-Gly) (interchain with G-Cter in SUMO2) cross-link. Residues 1028 to 1070 (ARAVSPLDPSKEVSGKEKASEQESEGSKAAHGGHSGGGSEGHK) form a disordered region. Position 1032 is a phosphoserine (serine 1032). Over residues 1036–1055 (PSKEVSGKEKASEQESEGSK) the composition is skewed to basic and acidic residues. Residues lysine 1055 and lysine 1070 each participate in a glycyl lysine isopeptide (Lys-Gly) (interchain with G-Cter in SUMO2) cross-link. Residue serine 1133 is modified to Phosphoserine.

Belongs to the ARID5B family. Methylation at Lys-336 prevents DNA-binding. Demethylation by PHF2 promotes recruitment of the PHF2-ARID5B complex to promoters. In terms of tissue distribution, widely expressed, including in liver (at protein level).

It localises to the nucleus. Its function is as follows. Transcription coactivator that binds to the 5'-AATA[CT]-3' core sequence and plays a key role in adipogenesis and liver development. Acts by forming a complex with phosphorylated PHF2, which mediates demethylation at Lys-336, leading to target the PHF2-ARID5B complex to target promoters, where PHF2 mediates demethylation of dimethylated 'Lys-9' of histone H3 (H3K9me2), followed by transcription activation of target genes. The PHF2-ARID5B complex acts as a coactivator of HNF4A in liver. Required for adipogenesis: regulates triglyceride metabolism in adipocytes by regulating expression of adipogenic genes. Overexpression leads to induction of smooth muscle marker genes, suggesting that it may also act as a regulator of smooth muscle cell differentiation and proliferation. Represses the cytomegalovirus enhancer. This chain is AT-rich interactive domain-containing protein 5B (ARID5B), found in Homo sapiens (Human).